Consider the following 198-residue polypeptide: Putative manganese efflux pump MntP (198 aa).

6 helical membrane-spanning segments follow: residues 3-23 (SIEL…VAIC), 37-57 (VLTG…GYLL), 65-85 (ITSI…INMI), 105-127 (SLTV…FAFL), 131-153 (IIPA…VKIG), and 171-191 (ILIG…SFVF).

The protein belongs to the MntP (TC 9.B.29) family.

It localises to the cell membrane. Its function is as follows. Probably functions as a manganese efflux pump. This is Putative manganese efflux pump MntP from Acetivibrio thermocellus (strain ATCC 27405 / DSM 1237 / JCM 9322 / NBRC 103400 / NCIMB 10682 / NRRL B-4536 / VPI 7372) (Clostridium thermocellum).